We begin with the raw amino-acid sequence, 142 residues long: Peptidyl-prolyl cis-trans isomerase FKBP2 (142 aa).

The signal sequence occupies residues 1–21 (MRLSWFRVLTVLSICLSAVAT). The 89-residue stretch at 49–137 (GDVLHMHYTG…VFEVELLKIE (89 aa)) folds into the PPIase FKBP-type domain. A Prevents secretion from ER motif is present at residues 139-142 (RTEL).

This sequence belongs to the FKBP-type PPIase family. FKBP2 subfamily. In terms of assembly, interacts with ARFGEF1/BIG1 and the C-terminal of EPB41L2. As to expression, T-cells and thymus.

Its subcellular location is the endoplasmic reticulum membrane. It catalyses the reaction [protein]-peptidylproline (omega=180) = [protein]-peptidylproline (omega=0). Inhibited by both FK506 and rapamycin. In terms of biological role, PPIases accelerate the folding of proteins. It catalyzes the cis-trans isomerization of proline imidic peptide bonds in oligopeptides. This chain is Peptidyl-prolyl cis-trans isomerase FKBP2 (FKBP2), found in Homo sapiens (Human).